The following is a 237-amino-acid chain: Ribonuclease PH (237 aa).

Phosphate-binding positions include arginine 86 and 124 to 126 (GTR).

This sequence belongs to the RNase PH family. In terms of assembly, homohexameric ring arranged as a trimer of dimers.

The enzyme catalyses tRNA(n+1) + phosphate = tRNA(n) + a ribonucleoside 5'-diphosphate. In terms of biological role, phosphorolytic 3'-5' exoribonuclease that plays an important role in tRNA 3'-end maturation. Removes nucleotide residues following the 3'-CCA terminus of tRNAs; can also add nucleotides to the ends of RNA molecules by using nucleoside diphosphates as substrates, but this may not be physiologically important. Probably plays a role in initiation of 16S rRNA degradation (leading to ribosome degradation) during starvation. In Shewanella denitrificans (strain OS217 / ATCC BAA-1090 / DSM 15013), this protein is Ribonuclease PH.